Consider the following 66-residue polypeptide: Beta-toxin Cb1 (66 aa).

In terms of domain architecture, LCN-type CS-alpha/beta spans 1-66 (KEGYIVNHST…VWPLPKKTCN (66 aa)). Disulfide bonds link cysteine 12-cysteine 65, cysteine 16-cysteine 41, cysteine 25-cysteine 46, and cysteine 29-cysteine 48.

This sequence belongs to the long (4 C-C) scorpion toxin superfamily. Sodium channel inhibitor family. Beta subfamily. Expressed by the venom gland.

It localises to the secreted. Inhibited by human antibodies scFvs 10FG2 and LR. Beta toxins bind voltage-independently at site-4 of sodium channels (Nav) and reduces peak current and shifts the voltage of activation toward more negative potentials thereby affecting sodium channel activation and promoting spontaneous and repetitive firing. Has an inhibitory effect on voltage-gated sodium channel hNav1.6/SCN8A, affecting both the activation and inactivation processes. This toxin is active against mammals and lethal to mice. This is Beta-toxin Cb1 from Centruroides baergi (Scorpion).